A 310-amino-acid polypeptide reads, in one-letter code: Prostate androgen-regulated mucin-like protein 1 homolog (310 aa).

Residues 1–20 form the signal peptide; that stretch reads MVYKTLFALCILTAGWRVQS. The Extracellular portion of the chain corresponds to 21 to 258; sequence LPTSAPLSVS…EVEHALSSGS (238 aa). Over residues 40-74 the composition is skewed to polar residues; that stretch reads TIWTSSPQNTDADTASPSNGTHNNSVLPVTASAPT. A disordered region spans residues 40–224; that stretch reads TIWTSSPQNT…VPQEKTPPTT (185 aa). 3 N-linked (GlcNAc...) asparagine glycosylation sites follow: Asn-58, Asn-62, and Asn-80. Residues 92 to 103 are compositionally biased toward polar residues; the sequence is SPGSNWEGTNTD. Low complexity predominate over residues 150 to 209; sequence SPQAPASSPSSLSTSPPEVFSVSVTTNHSSTVTSTQPTGAPTAPESPTEESSSDHTPTSH. Residue Asn-176 is glycosylated (N-linked (GlcNAc...) asparagine). A helical membrane pass occupies residues 259-279; that stretch reads IAAITVTVIAVVLLVFGVAAY. Residues 280-310 are Cytoplasmic-facing; sequence LKIRHSSYGRLLDDHDYGSWGNYNNPLYDDS. Ser-298 carries the phosphoserine modification.

It belongs to the PARM family. Highly N-glycosylated and O-glycosylated.

It localises to the cell membrane. The protein localises to the golgi apparatus membrane. It is found in the endosome membrane. In terms of biological role, may regulate TLP1 expression and telomerase activity, thus enabling certain prostatic cells to resist apoptosis. The sequence is that of Prostate androgen-regulated mucin-like protein 1 homolog (PARM1) from Pongo abelii (Sumatran orangutan).